Consider the following 101-residue polypeptide: NADH-quinone oxidoreductase subunit K (101 aa).

Helical transmembrane passes span 4–24 (LTHY…GIFL), 30–50 (IVLL…FIAF), and 61–81 (IFVF…LAIL).

It belongs to the complex I subunit 4L family. NDH-1 is composed of 14 different subunits. Subunits NuoA, H, J, K, L, M, N constitute the membrane sector of the complex.

It localises to the cell inner membrane. The enzyme catalyses a quinone + NADH + 5 H(+)(in) = a quinol + NAD(+) + 4 H(+)(out). Its function is as follows. NDH-1 shuttles electrons from NADH, via FMN and iron-sulfur (Fe-S) centers, to quinones in the respiratory chain. The immediate electron acceptor for the enzyme in this species is believed to be ubiquinone. Couples the redox reaction to proton translocation (for every two electrons transferred, four hydrogen ions are translocated across the cytoplasmic membrane), and thus conserves the redox energy in a proton gradient. In Laribacter hongkongensis (strain HLHK9), this protein is NADH-quinone oxidoreductase subunit K.